Reading from the N-terminus, the 183-residue chain is Holliday junction branch migration complex subunit RuvA (183 aa).

The segment at 1–63 (MIVGLIGVVE…EDANLLYGFL (63 aa)) is domain I. A domain II region spans residues 64-139 (EESEKILFER…FFIQDENRPA (76 aa)). Position 139 (A139) is a region of interest, flexible linker. Positions 139 to 183 (ARNEVFLALESLGFKSAEINKVLKTLKPNLSIEAAIKEALQQLRS) are domain III.

This sequence belongs to the RuvA family. In terms of assembly, homotetramer. Forms an RuvA(8)-RuvB(12)-Holliday junction (HJ) complex. HJ DNA is sandwiched between 2 RuvA tetramers; dsDNA enters through RuvA and exits via RuvB. An RuvB hexamer assembles on each DNA strand where it exits the tetramer. Each RuvB hexamer is contacted by two RuvA subunits (via domain III) on 2 adjacent RuvB subunits; this complex drives branch migration. In the full resolvosome a probable DNA-RuvA(4)-RuvB(12)-RuvC(2) complex forms which resolves the HJ.

The protein localises to the cytoplasm. Functionally, the RuvA-RuvB-RuvC complex processes Holliday junction (HJ) DNA during genetic recombination and DNA repair, while the RuvA-RuvB complex plays an important role in the rescue of blocked DNA replication forks via replication fork reversal (RFR). RuvA specifically binds to HJ cruciform DNA, conferring on it an open structure. The RuvB hexamer acts as an ATP-dependent pump, pulling dsDNA into and through the RuvAB complex. HJ branch migration allows RuvC to scan DNA until it finds its consensus sequence, where it cleaves and resolves the cruciform DNA. In Helicobacter pylori (strain HPAG1), this protein is Holliday junction branch migration complex subunit RuvA.